We begin with the raw amino-acid sequence, 35 residues long: Photosystem II reaction center protein Psb30 (35 aa).

Residues 7–27 (LIANFAALALITLAGPAVIFI) traverse the membrane as a helical segment.

This sequence belongs to the Psb30/Ycf12 family. As to quaternary structure, PSII is composed of 1 copy each of membrane proteins PsbA, PsbB, PsbC, PsbD, PsbE, PsbF, PsbH, PsbI, PsbJ, PsbK, PsbL, PsbM, PsbT, PsbX, PsbY, PsbZ, Psb30/Ycf12, peripheral proteins of the oxygen-evolving complex and a large number of cofactors. It forms dimeric complexes.

The protein localises to the plastid. Its subcellular location is the organellar chromatophore thylakoid membrane. In terms of biological role, a core subunit of photosystem II (PSII), probably helps stabilize the reaction center. The chain is Photosystem II reaction center protein Psb30 from Paulinella chromatophora.